Reading from the N-terminus, the 60-residue chain is Translational regulator CsrA (60 aa).

The protein belongs to the CsrA/RsmA family. As to quaternary structure, homodimer; the beta-strands of each monomer intercalate to form a hydrophobic core, while the alpha-helices form wings that extend away from the core.

It localises to the cytoplasm. A key translational regulator that binds mRNA to regulate translation initiation and/or mRNA stability. Mediates global changes in gene expression, shifting from rapid growth to stress survival by linking envelope stress, the stringent response and the catabolite repression systems. Usually binds in the 5'-UTR; binding at or near the Shine-Dalgarno sequence prevents ribosome-binding, repressing translation, binding elsewhere in the 5'-UTR can activate translation and/or stabilize the mRNA. Its function is antagonized by small RNA(s). This is Translational regulator CsrA from Histophilus somni (strain 2336) (Haemophilus somnus).